Here is a 303-residue protein sequence, read N- to C-terminus: Aspartate carbamoyltransferase catalytic subunit (303 aa).

2 residues coordinate carbamoyl phosphate: Arg-51 and Thr-52. Lys-80 is a binding site for L-aspartate. Positions 101, 129, and 132 each coordinate carbamoyl phosphate. L-aspartate contacts are provided by Arg-162 and Arg-221. The carbamoyl phosphate site is built by Leu-260 and Pro-261.

Belongs to the aspartate/ornithine carbamoyltransferase superfamily. ATCase family. In terms of assembly, heterooligomer of catalytic and regulatory chains.

The catalysed reaction is carbamoyl phosphate + L-aspartate = N-carbamoyl-L-aspartate + phosphate + H(+). Its pathway is pyrimidine metabolism; UMP biosynthesis via de novo pathway; (S)-dihydroorotate from bicarbonate: step 2/3. Functionally, catalyzes the condensation of carbamoyl phosphate and aspartate to form carbamoyl aspartate and inorganic phosphate, the committed step in the de novo pyrimidine nucleotide biosynthesis pathway. This is Aspartate carbamoyltransferase catalytic subunit from Saccharolobus islandicus (strain M.14.25 / Kamchatka #1) (Sulfolobus islandicus).